The sequence spans 230 residues: 2,3-bisphosphoglycerate-dependent phosphoglycerate mutase 1 (230 aa).

Substrate is bound by residues 8–15 (RHGQSEWN), 21–22 (TG), R60, 87–90 (ERHY), K98, 114–115 (RR), and 183–184 (GN). The Tele-phosphohistidine intermediate role is filled by H9. Catalysis depends on E87, which acts as the Proton donor/acceptor.

The protein belongs to the phosphoglycerate mutase family. BPG-dependent PGAM subfamily.

The catalysed reaction is (2R)-2-phosphoglycerate = (2R)-3-phosphoglycerate. The protein operates within carbohydrate degradation; glycolysis; pyruvate from D-glyceraldehyde 3-phosphate: step 3/5. Catalyzes the interconversion of 2-phosphoglycerate and 3-phosphoglycerate. The chain is 2,3-bisphosphoglycerate-dependent phosphoglycerate mutase 1 from Lactobacillus johnsonii (strain CNCM I-12250 / La1 / NCC 533).